Consider the following 244-residue polypeptide: Uridylate kinase (244 aa).

19–22 (KVSG) lines the ATP pocket. The segment at 27-32 (GERGFG) is involved in allosteric activation by GTP. Residue glycine 61 coordinates UMP. Positions 62 and 66 each coordinate ATP. UMP-binding positions include aspartate 80 and 141–148 (IGSPFFTT). Positions 168, 169, 174, and 177 each coordinate ATP.

This sequence belongs to the UMP kinase family. In terms of assembly, homohexamer.

It is found in the cytoplasm. The catalysed reaction is UMP + ATP = UDP + ADP. It participates in pyrimidine metabolism; CTP biosynthesis via de novo pathway; UDP from UMP (UMPK route): step 1/1. Allosterically activated by GTP. Inhibited by UTP. Catalyzes the reversible phosphorylation of UMP to UDP. The protein is Uridylate kinase of Anaplasma phagocytophilum (strain HZ).